Consider the following 192-residue polypeptide: GTP cyclohydrolase-2 (192 aa).

50 to 54 (RLHSE) provides a ligand contact to GTP. C55, C66, and C68 together coordinate Zn(2+). GTP-binding positions include 92-94 (EGR) and T114. D126 acts as the Proton acceptor in catalysis. The active-site Nucleophile is R128. GTP-binding residues include T149 and K154.

The protein belongs to the GTP cyclohydrolase II family. Zn(2+) is required as a cofactor.

The catalysed reaction is GTP + 4 H2O = 2,5-diamino-6-hydroxy-4-(5-phosphoribosylamino)-pyrimidine + formate + 2 phosphate + 3 H(+). It functions in the pathway cofactor biosynthesis; riboflavin biosynthesis; 5-amino-6-(D-ribitylamino)uracil from GTP: step 1/4. Catalyzes the conversion of GTP to 2,5-diamino-6-ribosylamino-4(3H)-pyrimidinone 5'-phosphate (DARP), formate and pyrophosphate. In Helicobacter acinonychis (strain Sheeba), this protein is GTP cyclohydrolase-2.